The primary structure comprises 110 residues: Replication initiation control protein YabA (110 aa).

The Zn(2+) site is built by histidine 84, cysteine 86, cysteine 100, and cysteine 103.

This sequence belongs to the YabA family. In terms of assembly, homotetramer. Interacts with both DnaA and DnaN, acting as a bridge between these two proteins. The cofactor is Zn(2+).

Its subcellular location is the cytoplasm. It localises to the nucleoid. In terms of biological role, involved in control of chromosome replication initiation. Inhibits the cooperative binding of DnaA to the oriC region, thus negatively regulating initiation of chromosome replication. Inhibits the ability of DnaA-ATP to form a helix on DNA; does not disassemble preformed DnaA-DNA helices. Decreases the residence time of DnaA on the chromosome at its binding sites (oriC, replication forks and promoter-binding sites). Tethers DnaA to the replication machinery via the DNA polymerase beta sliding clamp subunit (dnaN). Associates with oriC and other DnaA targets on the chromosome in a DnaA-dependent manner. This Streptococcus mutans serotype c (strain ATCC 700610 / UA159) protein is Replication initiation control protein YabA.